We begin with the raw amino-acid sequence, 163 residues long: Nucleotide-binding protein BBR47_25280 (163 aa).

Belongs to the YajQ family.

Functionally, nucleotide-binding protein. This chain is Nucleotide-binding protein BBR47_25280, found in Brevibacillus brevis (strain 47 / JCM 6285 / NBRC 100599).